The chain runs to 335 residues: GTPase Obg (335 aa).

In terms of domain architecture, Obg spans 1-158; sequence MFVDQITLEL…RLVELELKLI (158 aa). The region spanning 159-334 is the OBG-type G domain; sequence ADIGLVGFPN…LYDLFKSKLS (176 aa). GTP contacts are provided by residues 165 to 172, 190 to 194, 215 to 218, 285 to 288, and 315 to 317; these read GFPNAGKS, FTTLH, DIPG, NKID, and SGL. Serine 172 and threonine 192 together coordinate Mg(2+).

It belongs to the TRAFAC class OBG-HflX-like GTPase superfamily. OBG GTPase family. In terms of assembly, monomer. Requires Mg(2+) as cofactor.

The protein localises to the cytoplasm. Its function is as follows. An essential GTPase which binds GTP, GDP and possibly (p)ppGpp with moderate affinity, with high nucleotide exchange rates and a fairly low GTP hydrolysis rate. Plays a role in control of the cell cycle, stress response, ribosome biogenesis and in those bacteria that undergo differentiation, in morphogenesis control. In Chlamydia trachomatis serovar L2 (strain ATCC VR-902B / DSM 19102 / 434/Bu), this protein is GTPase Obg.